The following is a 528-amino-acid chain: Beta-hexosaminidase subunit alpha (528 aa).

Positions 1–22 (MAGCRLWVSLLLAAALACLATA) are cleaved as a signal peptide. Positions 23–88 (LWPWPQYIQT…PRPSFSNKQQ (66 aa)) are excised as a propeptide. The cysteines at positions 58 and 104 are disulfide-linked. N-linked (GlcNAc...) asparagine glycosylation is found at Asn115, Asn157, and Asn295. A disulfide bridge links Cys277 with Cys328. The active-site Proton donor is Glu323. The tract at residues 422 to 423 (NR) is critical for hydrolysis GM2 gangliosides. Residue Asn487 is glycosylated (N-linked (GlcNAc...) asparagine). A disulfide bond links Cys504 and Cys521.

The protein belongs to the glycosyl hydrolase 20 family. In terms of assembly, there are 3 beta-hexosaminidase isozymes: isozyme A (hexosaminidase A) is a heterodimer composed of one subunit alpha and one subunit beta (chain A and B); isozyme B (hexosaminidase B) is a homodimer of two beta subunits (two chains A and B); isozyme S (hexosaminidase S) is a homodimer of two alpha subunits. The composition of the dimer (isozyme A versus isozyme S) has a significant effect on the substrate specificity of the alpha subunit active site. In terms of tissue distribution, ubiquitous. Most abundant in testis, adrenal, epididymis and heart. Low levels seen in the liver.

Its subcellular location is the lysosome. It carries out the reaction Hydrolysis of terminal non-reducing N-acetyl-D-hexosamine residues in N-acetyl-beta-D-hexosaminides.. The catalysed reaction is N-acetyl-beta-D-galactosaminyl-(1-&gt;4)-beta-D-3-sulfogalactosyl-(1-&gt;4)-beta-D-glucosyl-(1&lt;-&gt;1')-ceramide + H2O = a beta-D-3-sulfogalactosyl-(1-&gt;4)-beta-D-glucosyl-(1&lt;-&gt;1')-ceramide + N-acetyl-beta-D-galactosamine. It catalyses the reaction a ganglioside GM2 (d18:1(4E)) + H2O = a ganglioside GM3 (d18:1(4E)) + N-acetyl-beta-D-galactosamine. The enzyme catalyses a ganglioside GM2 + H2O = a ganglioside GM3 + N-acetyl-beta-D-galactosamine. It carries out the reaction beta-D-GalNAc-(1-&gt;4)-alpha-L-IdoA-(1-&gt;3)-beta-D-GalNAc-4-sulfate-(1-&gt;4)-alpha-L-IdoA-(1-&gt;3)-D-GalNAc-4-sulfate + H2O = alpha-L-IdoA-(1-&gt;3)-beta-D-GalNAc-4-sulfate-(1-&gt;4)-alpha-L-IdoA-(1-&gt;3)-D-GalNAc-4-sulfate + N-acetyl-D-galactosamine. The catalysed reaction is N-acetyl-beta-D-6-sulfogalactosaminyl-(1-&gt;4)-alpha-L-iduronyl-(1-&gt;3)-N-acetyl-D-6-sulfogalactosamine + H2O = alpha-L-iduronyl-(1-&gt;3)-N-acetyl-D-6-sulfogalactosamine + N-acetyl-D-6-sulfogalactosamine. Addition of GM2A stimulates the hydrolysis of sulfated glycosphingolipid SM2 and the ganglioside GM2. In terms of biological role, hydrolyzes the non-reducing end N-acetyl-D-hexosamine and/or sulfated N-acetyl-D-hexosamine of glycoconjugates, such as the oligosaccharide moieties from proteins and neutral glycolipids, or from certain mucopolysaccharides. The isozyme S is as active as the isozyme A on the anionic bis-sulfated glycans, the chondroitin-6-sulfate trisaccharide (C6S-3), and the dermatan sulfate pentasaccharide, and the sulfated glycosphingolipid SM2. The isozyme B does not hydrolyze each of these substrates, however hydrolyzes efficiently neutral oligosaccharide. Only the isozyme A is responsible for the degradation of GM2 gangliosides in the presence of GM2A. This Mus musculus (Mouse) protein is Beta-hexosaminidase subunit alpha.